The sequence spans 1648 residues: Histone transcription regulator 3 (1648 aa).

Disordered stretches follow at residues asparagine 301–asparagine 371 and aspartate 1597–arginine 1630. Position 302 is a phosphothreonine (threonine 302). The residue at position 304 (serine 304) is a Phosphoserine. Basic and acidic residues predominate over residues glutamate 339–serine 353. Residues aspartate 1597–glycine 1610 show a composition bias toward polar residues. The segment covering serine 1611–serine 1625 has biased composition (low complexity).

Belongs to the HIR3 family. In terms of assembly, component of the HIR complex, composed of HIR1, HIR2, HIR3 and HPC2. This complex may consist of one copy of HIR1 and HIR3 and two copies of HIR2 and HPC2. The HIR complex interacts with ASF1. Interacts with RTT106.

It localises to the nucleus. The protein localises to the chromosome. Functionally, HIR1, HIR2 and HIR3 are repressors of histone gene transcription. They are required for the periodic repression of three of the four histone gene loci during cell cycle as well as for autogenous regulation of the HTA1-HTB1 locus by H2A and H2B. Also has a role in nucleosome assembly. The chain is Histone transcription regulator 3 (HIR3) from Saccharomyces cerevisiae (strain ATCC 204508 / S288c) (Baker's yeast).